The chain runs to 414 residues: Glutathione gamma-glutamylcysteinyltransferase (414 aa).

The Peptidase C83 domain maps to 37 to 256 (QLKKSFYKRQ…GYVLLEPMHI (220 aa)).

It belongs to the phytochelatin synthase family.

The enzyme catalyses [Glu(-Cys)](n)-Gly + glutathione + H(+) = [Glu(-Cys)](n+1)-Gly + glycine. Its function is as follows. Required for detoxification of heavy metals such as cadmium and arsenate. The protein is Glutathione gamma-glutamylcysteinyltransferase of Schizosaccharomyces pombe (strain 972 / ATCC 24843) (Fission yeast).